Consider the following 112-residue polypeptide: Nitrogenase-stabilizing/protective protein NifW (112 aa).

Belongs to the NifW family. In terms of assembly, homotrimer; associates with NifD.

Functionally, may protect the nitrogenase Fe-Mo protein from oxidative damage. This is Nitrogenase-stabilizing/protective protein NifW from Burkholderia vietnamiensis (strain G4 / LMG 22486) (Burkholderia cepacia (strain R1808)).